A 439-amino-acid polypeptide reads, in one-letter code: D-erythronate kinase (439 aa).

Residues serine 253, 366–369 (GGDV), and glycine 412 contribute to the ATP site.

Belongs to the four-carbon acid sugar kinase family.

It catalyses the reaction D-erythronate + ATP = 4-phospho-D-erythronate + ADP + H(+). Functionally, catalyzes the ATP-dependent phosphorylation of D-erythronate to D-erythronate 4-phosphate. Can also phosphorylate D-threonate and 4-hydroxy-L-threonine, with lower efficiency. The chain is D-erythronate kinase from Heliobacterium modesticaldum (strain ATCC 51547 / Ice1).